The primary structure comprises 111 residues: Phosphoribosyl-AMP cyclohydrolase (111 aa).

Asp80 is a Mg(2+) binding site. Cys81 provides a ligand contact to Zn(2+). Mg(2+) contacts are provided by Asp82 and Asp84. Cys97 and Cys104 together coordinate Zn(2+).

This sequence belongs to the PRA-CH family. Homodimer. Requires Mg(2+) as cofactor. It depends on Zn(2+) as a cofactor.

The protein resides in the cytoplasm. The catalysed reaction is 1-(5-phospho-beta-D-ribosyl)-5'-AMP + H2O = 1-(5-phospho-beta-D-ribosyl)-5-[(5-phospho-beta-D-ribosylamino)methylideneamino]imidazole-4-carboxamide. It participates in amino-acid biosynthesis; L-histidine biosynthesis; L-histidine from 5-phospho-alpha-D-ribose 1-diphosphate: step 3/9. Its function is as follows. Catalyzes the hydrolysis of the adenine ring of phosphoribosyl-AMP. The chain is Phosphoribosyl-AMP cyclohydrolase from Mycobacterium marinum (strain ATCC BAA-535 / M).